The following is a 555-amino-acid chain: Lysine--tRNA ligase (555 aa).

Residues 37–45 (TSGRLHVGN) carry the 'HIGH' region motif. The 'KMSKS' region motif lies at 301–305 (AMSSS).

The protein belongs to the class-I aminoacyl-tRNA synthetase family.

The protein localises to the cytoplasm. The catalysed reaction is tRNA(Lys) + L-lysine + ATP = L-lysyl-tRNA(Lys) + AMP + diphosphate. The sequence is that of Lysine--tRNA ligase from Methanopyrus kandleri (strain AV19 / DSM 6324 / JCM 9639 / NBRC 100938).